The chain runs to 513 residues: GMP synthase [glutamine-hydrolyzing] (513 aa).

The Glutamine amidotransferase type-1 domain maps to 9–198 (MILVLDFGSQ…VRRICDCTGE (190 aa)). The active-site Nucleophile is C86. Residues H172 and E174 contribute to the active site. In terms of domain architecture, GMPS ATP-PPase spans 199-388 (WTMENFIDLE…LGIPEHLVWR (190 aa)). 226–232 (SGGVDSS) serves as a coordination point for ATP.

As to quaternary structure, homodimer.

It carries out the reaction XMP + L-glutamine + ATP + H2O = GMP + L-glutamate + AMP + diphosphate + 2 H(+). The protein operates within purine metabolism; GMP biosynthesis; GMP from XMP (L-Gln route): step 1/1. Functionally, catalyzes the synthesis of GMP from XMP. This is GMP synthase [glutamine-hydrolyzing] from Staphylococcus carnosus (strain TM300).